Consider the following 252-residue polypeptide: Trans-aconitate 2-methyltransferase (252 aa).

Belongs to the methyltransferase superfamily. Tam family.

The protein localises to the cytoplasm. The catalysed reaction is trans-aconitate + S-adenosyl-L-methionine = (E)-3-(methoxycarbonyl)pent-2-enedioate + S-adenosyl-L-homocysteine. Catalyzes the S-adenosylmethionine monomethyl esterification of trans-aconitate. This Escherichia coli (strain SE11) protein is Trans-aconitate 2-methyltransferase.